We begin with the raw amino-acid sequence, 919 residues long: Translation initiation factor IF-2 (919 aa).

Over residues 93–107 (MGKALPEEVPEKIAP) the composition is skewed to basic and acidic residues. 2 disordered regions span residues 93–145 (MGKA…PAEP) and 158–279 (KIQP…RKGE). Residues 136–145 (LAPPEKPAEP) are compositionally biased toward pro residues. Residues 158–171 (KIQPPEKFAEEPLK) show a composition bias toward basic and acidic residues. Over residues 172–193 (KPAVIEPEKAAAAPKAVPGEAK) the composition is skewed to low complexity. Composition is skewed to basic and acidic residues over residues 194-203 (PLPRTERVQE) and 256-279 (GAPK…RKGE). The region spanning 420-589 (PRAPVVTIMG…LLQADVLELK (170 aa)) is the tr-type G domain. The tract at residues 429 to 436 (GHVDHGKT) is G1. Residue 429–436 (GHVDHGKT) coordinates GTP. The segment at 454–458 (GITQA) is G2. Residues 475–478 (DTPG) form a G3 region. GTP is bound by residues 475–479 (DTPGH) and 529–532 (NKID). A G4 region spans residues 529 to 532 (NKID). Positions 565–567 (SAK) are G5.

It belongs to the TRAFAC class translation factor GTPase superfamily. Classic translation factor GTPase family. IF-2 subfamily.

The protein resides in the cytoplasm. Its function is as follows. One of the essential components for the initiation of protein synthesis. Protects formylmethionyl-tRNA from spontaneous hydrolysis and promotes its binding to the 30S ribosomal subunits. Also involved in the hydrolysis of GTP during the formation of the 70S ribosomal complex. This chain is Translation initiation factor IF-2, found in Syntrophus aciditrophicus (strain SB).